Reading from the N-terminus, the 389-residue chain is Phospho-N-acetylmuramoyl-pentapeptide-transferase (389 aa).

Transmembrane regions (helical) follow at residues 25-45 (RAVM…PWVI), 74-94 (MGGV…CDWG), 97-117 (FIWV…VDDY), 134-154 (FFWQ…SVSE), 190-210 (ISYP…IVGS), 222-242 (GLVI…AYVM), 259-279 (AGEL…FLWF), 286-306 (VFMG…VAVI), 311-331 (IVLF…MAQV), and 366-386 (QVTV…LSTL).

This sequence belongs to the glycosyltransferase 4 family. MraY subfamily. It depends on Mg(2+) as a cofactor.

It localises to the cell inner membrane. The catalysed reaction is UDP-N-acetyl-alpha-D-muramoyl-L-alanyl-gamma-D-glutamyl-meso-2,6-diaminopimeloyl-D-alanyl-D-alanine + di-trans,octa-cis-undecaprenyl phosphate = di-trans,octa-cis-undecaprenyl diphospho-N-acetyl-alpha-D-muramoyl-L-alanyl-D-glutamyl-meso-2,6-diaminopimeloyl-D-alanyl-D-alanine + UMP. It functions in the pathway cell wall biogenesis; peptidoglycan biosynthesis. Functionally, catalyzes the initial step of the lipid cycle reactions in the biosynthesis of the cell wall peptidoglycan: transfers peptidoglycan precursor phospho-MurNAc-pentapeptide from UDP-MurNAc-pentapeptide onto the lipid carrier undecaprenyl phosphate, yielding undecaprenyl-pyrophosphoryl-MurNAc-pentapeptide, known as lipid I. This Cupriavidus necator (strain ATCC 17699 / DSM 428 / KCTC 22496 / NCIMB 10442 / H16 / Stanier 337) (Ralstonia eutropha) protein is Phospho-N-acetylmuramoyl-pentapeptide-transferase.